The chain runs to 403 residues: Flavohemoprotein (403 aa).

The Globin domain maps to 1-138; it reads MLTQKTKDIV…LADILAGMES (138 aa). Position 85 (His85) interacts with heme b. Catalysis depends on charge relay system residues Tyr95 and Glu137. The segment at 149–403 is reductase; the sequence is GGWAGWRRFI…EVFGPDLFAE (255 aa). Positions 152-262 constitute an FAD-binding FR-type domain; sequence AGWRRFIVRE…AAPYGNFYID (111 aa). FAD is bound by residues Tyr190 and 206–209; that span reads RQYS. Residue 275–280 participates in NADP(+) binding; it reads GVGLTP. FAD is bound at residue 395–398; it reads VFGP.

It belongs to the globin family. Two-domain flavohemoproteins subfamily. This sequence in the C-terminal section; belongs to the flavoprotein pyridine nucleotide cytochrome reductase family. Heme b is required as a cofactor. Requires FAD as cofactor.

The enzyme catalyses 2 nitric oxide + NADPH + 2 O2 = 2 nitrate + NADP(+) + H(+). The catalysed reaction is 2 nitric oxide + NADH + 2 O2 = 2 nitrate + NAD(+) + H(+). Is involved in NO detoxification in an aerobic process, termed nitric oxide dioxygenase (NOD) reaction that utilizes O(2) and NAD(P)H to convert NO to nitrate, which protects the bacterium from various noxious nitrogen compounds. Therefore, plays a central role in the inducible response to nitrosative stress. The polypeptide is Flavohemoprotein (Rhizobium meliloti (strain 1021) (Ensifer meliloti)).